A 531-amino-acid polypeptide reads, in one-letter code: MSKAPLFEKISVKGTLFPIEVSMKRLHLSHPYTCNGQEFSSLPMYDTSGLHGDCRTQVDPHVGLPPLRSSWNFPRTVQLGVAQTQMHYARKGVITPEMEYVAIRENQQLEEWIRSFNRHGKKVEPITPEFVRQEIAAGRAIIPANLKHPELEPMIIGRHFRVKINSNIGNSAMGSSIEEEVEKAVWSCRWGADTVMDLSTGANIHQTREWILRNSPVPIGTVPVYQALEKAGGKAENLTWELYRDTLIEQAEQGVDYFTIHAGILQEHLPYAERRLTGIVSRGGSIMATWCRHHQQENFLYTHFNDICEILKSYDIAVSLGDALRPGSILDANDEAQFGELKVLGELTKQAWQHEVQVMIEGPGHVPLNLIEENMQKELELCYEAPFYTLGPLITDIAAGYDHINSAIGGALLASLGCSMLCYVTPKEHLGLPDRNDVREGVIAHKVAAHGADIARGNPTAWLRDTLMSQARYSFAWEDQFNLSLDPEKTRAVHSQSIAASGYSAPNPDFCTMCGPDFCSMKRTQKMGKGN.

Substrate-binding positions include asparagine 167, methionine 196, tyrosine 225, histidine 261, serine 281–glycine 283, aspartate 322–arginine 325, and glutamate 361. Zn(2+) is bound at residue histidine 365. Tyrosine 388 lines the substrate pocket. Histidine 429 is a binding site for Zn(2+). Residues cysteine 511, cysteine 514, and cysteine 519 each coordinate [4Fe-4S] cluster.

This sequence belongs to the ThiC family. [4Fe-4S] cluster is required as a cofactor.

The enzyme catalyses 5-amino-1-(5-phospho-beta-D-ribosyl)imidazole + S-adenosyl-L-methionine = 4-amino-2-methyl-5-(phosphooxymethyl)pyrimidine + CO + 5'-deoxyadenosine + formate + L-methionine + 3 H(+). It participates in cofactor biosynthesis; thiamine diphosphate biosynthesis. Functionally, catalyzes the synthesis of the hydroxymethylpyrimidine phosphate (HMP-P) moiety of thiamine from aminoimidazole ribotide (AIR) in a radical S-adenosyl-L-methionine (SAM)-dependent reaction. The polypeptide is Phosphomethylpyrimidine synthase (Chlorobium chlorochromatii (strain CaD3)).